Here is a 377-residue protein sequence, read N- to C-terminus: Alanine racemase (377 aa).

Lys-37 serves as the catalytic Proton acceptor; specific for D-alanine. An N6-(pyridoxal phosphate)lysine modification is found at Lys-37. Residue Arg-135 coordinates substrate. Catalysis depends on Tyr-271, which acts as the Proton acceptor; specific for L-alanine. Met-319 contacts substrate.

It belongs to the alanine racemase family. It depends on pyridoxal 5'-phosphate as a cofactor.

It carries out the reaction L-alanine = D-alanine. Its pathway is amino-acid biosynthesis; D-alanine biosynthesis; D-alanine from L-alanine: step 1/1. In terms of biological role, catalyzes the interconversion of L-alanine and D-alanine. May also act on other amino acids. The protein is Alanine racemase (alr) of Helicobacter pylori (strain G27).